We begin with the raw amino-acid sequence, 507 residues long: Probable allantoinase (507 aa).

Histidine 105, histidine 107, lysine 195, histidine 231, histidine 294, and aspartate 368 together coordinate Zn(2+). Lysine 195 carries the N6-carboxylysine modification.

This sequence belongs to the metallo-dependent hydrolases superfamily. Allantoinase family. In terms of assembly, homotetramer. It depends on Zn(2+) as a cofactor. Post-translationally, carboxylation allows a single lysine to coordinate two zinc ions.

It catalyses the reaction (S)-allantoin + H2O = allantoate + H(+). Its pathway is nitrogen metabolism; (S)-allantoin degradation; allantoate from (S)-allantoin: step 1/1. Catalyzes the conversion of allantoin (5-ureidohydantoin) to allantoate by hydrolytic cleavage of the five-member hydantoin ring. Catalyzes the first step of the ureide allantoin degradation followed by the sequential activity of AAH, UGLYAH and UAH which allows a complete purine breakdown without the intermediate generation of urea. This Oryza sativa subsp. japonica (Rice) protein is Probable allantoinase (ALN).